Consider the following 826-residue polypeptide: Arf-GAP with ANK repeat and PH domain-containing protein cnt-1 (826 aa).

Positions 275 to 373 constitute a PH domain; sequence DVMMEGYLYK…WMRALQRTIL (99 aa). An Arf-GAP domain is found at 447–572; sequence TTAFEQVRRV…RFAVAEDTRA (126 aa). The C4-type zinc-finger motif lies at 462 to 485; sequence CADCGSPAPKWVSINLGVVLCIEC. The disordered stretch occupies residues 570-604; the sequence is TRARSSATNRQEHLKHKTSIGGNSSSNGVNRSSSY. Over residues 588-603 the composition is skewed to low complexity; sequence SIGGNSSSNGVNRSSS. 3 ANK repeats span residues 690 to 719, 723 to 752, and 756 to 789; these read NGTT…KINM, KLNT…DSNL, and DSKT…NADF.

As to quaternary structure, interacts (via C-terminal ankyrin repeat) with rab-10 (GTP-bound form); the interaction is required for cnt-1 recruitment to endosomes. Interacts (via C-terminal ankyrin repeat) with rab-8 (GTP-bound form) and rab-35 (GTP-bound form). Cleaved by caspase ced-3 after Asp-382 and Asp-609. Cleavage at Asp-382 is required for subsequent cleavage at Asp-609.

The protein resides in the cytoplasm. Its subcellular location is the recycling endosome membrane. It is found in the basolateral cell membrane. The protein localises to the apical cell membrane. It localises to the cell membrane. GTPase-activating protein for the ADP ribosylation factor family. Regulates endosome recycling downstream of rab-10 and upstream of arf-6. Its function is as follows. Promotes apoptosis during embryonic development. Produced by caspase ced-3-mediated cleavage, and translocates to the plasma membrane where it prevents the activation of the prosurvival Akt-1/2 and sgk-1 signaling pathway by competing with Akt-1/2 for the binding to PtdIns(3,4,5)P3. The sequence is that of Arf-GAP with ANK repeat and PH domain-containing protein cnt-1 from Caenorhabditis elegans.